A 164-amino-acid polypeptide reads, in one-letter code: 3-isopropylmalate dehydratase small subunit (164 aa).

Belongs to the LeuD family. LeuD type 2 subfamily. Heterodimer of LeuC and LeuD.

It catalyses the reaction (2R,3S)-3-isopropylmalate = (2S)-2-isopropylmalate. The protein operates within amino-acid biosynthesis; L-leucine biosynthesis; L-leucine from 3-methyl-2-oxobutanoate: step 2/4. Its function is as follows. Catalyzes the isomerization between 2-isopropylmalate and 3-isopropylmalate, via the formation of 2-isopropylmaleate. The chain is 3-isopropylmalate dehydratase small subunit from Syntrophus aciditrophicus (strain SB).